Consider the following 519-residue polypeptide: Sugar transport protein MST5 (519 aa).

The Cytoplasmic segment spans residues 1–18 (MAGGAMVQTVGGKTYPGK). The chain crosses the membrane as a helical span at residues 19-39 (MTAFVFFTCLVASSGGLIFGY). Residues 40 to 80 (DIGISGGVTSMDSFLSEFFPSVYAQAKASKDTNQYCKFDSQ) lie on the Extracellular side of the membrane. Residues 81–101 (LLTLFTSSLYLAALATSFVAA) form a helical membrane-spanning segment. At 102 to 110 (WVTRVFGRK) the chain is on the cytoplasmic side. A helical transmembrane segment spans residues 111–127 (WSMFCGGVTFLAGSALN). A topological domain (extracellular) is located at residue glycine 128. Residues 129-149 (AATDVMMLILGRILLGIGVGF) form a helical membrane-spanning segment. Residues 150-167 (ANQSVPLYLSEMAPANLR) are Cytoplasmic-facing. The helical transmembrane segment at 168 to 188 (GMLNIGFQLMTTIGILSANLI) threads the bilayer. Topologically, residues 189-202 (NYATSSIEGGWGWR) are extracellular. A helical membrane pass occupies residues 203–223 (IGLGLAGVPALIITLGALVLP). Residues 224–295 (DTPNSLIARG…IAILIPCFQQ (72 aa)) lie on the Cytoplasmic side of the membrane. A helical transmembrane segment spans residues 296–316 (LTGINVIMFYAPVLFLTIGFA). The Extracellular portion of the chain corresponds to 317–321 (GDASL). The helical transmembrane segment at 322 to 342 (MSAVITGLVNMFATVVSIISV) threads the bilayer. Over 343–357 (DRLGRRVLFLQGGTQ) the chain is Cytoplasmic. A helical transmembrane segment spans residues 358–378 (MFISQVVVGTLIALQFGVAGV). The Extracellular segment spans residues 379 to 386 (GEMSRSYA). A helical membrane pass occupies residues 387–407 (ILLVLFICMYVAGFAWSWGPL). The Cytoplasmic segment spans residues 408 to 426 (GWLVPSEVFALEIRSAGQS). Residues 427-447 (IAVCVNMMLTFVIGQAFLTML) form a helical membrane-spanning segment. The Extracellular portion of the chain corresponds to 448-451 (CHLK). The helical transmembrane segment at 452 to 472 (FGLFYFFAGWMLVMTTFVALF) threads the bilayer. The Cytoplasmic segment spans residues 473-519 (LPETKGVPIEEMNHVWSRHWFWGSYVTAHDVAGAGAGGGGNRRSHNV).

Belongs to the major facilitator superfamily. Sugar transporter (TC 2.A.1.1) family. In terms of tissue distribution, expressed in panicles before heading. Expressed in flowers before pollination.

Its subcellular location is the membrane. Functionally, mediates active uptake of hexoses by sugar:proton symport. Can transport glucose, xylose and 3-O-methylglucose. May play a role at the early stage of seed development. This is Sugar transport protein MST5 from Oryza sativa subsp. japonica (Rice).